A 427-amino-acid polypeptide reads, in one-letter code: NAD kinase 2, mitochondrial (427 aa).

The transit peptide at 1-33 (MSLCLRLLCSVCGAAALRVPLGVSSLRALSGSA) directs the protein to the mitochondrion.

Belongs to the NAD kinase family. In terms of assembly, homodimer.

It localises to the mitochondrion. It catalyses the reaction NAD(+) + ATP = ADP + NADP(+) + H(+). Mitochondrial NAD(+) kinase that phosphorylates NAD(+) to yield NADP(+). Can use both ATP or inorganic polyphosphate as the phosphoryl donor. The chain is NAD kinase 2, mitochondrial (nadk2) from Xenopus tropicalis (Western clawed frog).